Reading from the N-terminus, the 155-residue chain is Transcription antitermination protein NusB (155 aa).

This sequence belongs to the NusB family.

In terms of biological role, involved in transcription antitermination. Required for transcription of ribosomal RNA (rRNA) genes. Binds specifically to the boxA antiterminator sequence of the ribosomal RNA (rrn) operons. The protein is Transcription antitermination protein NusB of Halorhodospira halophila (strain DSM 244 / SL1) (Ectothiorhodospira halophila (strain DSM 244 / SL1)).